A 144-amino-acid chain; its full sequence is Large ribosomal subunit protein uL15 (144 aa).

Residues 1–50 form a disordered region; the sequence is MRLNTLSPAAGAKSAKKRVGRGIGSGLGKTGGRGVKGAGSRSGGGVRAGF. A compositionally biased stretch (gly residues) spans 21–50; the sequence is RGIGSGLGKTGGRGVKGAGSRSGGGVRAGF.

Belongs to the universal ribosomal protein uL15 family. Part of the 50S ribosomal subunit.

Functionally, binds to the 23S rRNA. The chain is Large ribosomal subunit protein uL15 from Tolumonas auensis (strain DSM 9187 / NBRC 110442 / TA 4).